The sequence spans 413 residues: Phosphopentomutase (413 aa).

Mn(2+) contacts are provided by Asp11, Asp306, His311, Asp347, His348, and His359.

It belongs to the phosphopentomutase family. Mn(2+) is required as a cofactor.

It is found in the cytoplasm. The catalysed reaction is 2-deoxy-alpha-D-ribose 1-phosphate = 2-deoxy-D-ribose 5-phosphate. It carries out the reaction alpha-D-ribose 1-phosphate = D-ribose 5-phosphate. Its pathway is carbohydrate degradation; 2-deoxy-D-ribose 1-phosphate degradation; D-glyceraldehyde 3-phosphate and acetaldehyde from 2-deoxy-alpha-D-ribose 1-phosphate: step 1/2. Isomerase that catalyzes the conversion of deoxy-ribose 1-phosphate (dRib-1-P) and ribose 1-phosphate (Rib-1-P) to deoxy-ribose 5-phosphate (dRib-5-P) and ribose 5-phosphate (Rib-5-P), respectively. The sequence is that of Phosphopentomutase from Helicobacter pylori (strain J99 / ATCC 700824) (Campylobacter pylori J99).